The sequence spans 592 residues: ATP-dependent RNA helicase DBP3 (592 aa).

The tract at residues 1–146 is disordered; the sequence is MGKRPIEDDA…AGSYTEHTEL (146 aa). Positions 19-31 are enriched in basic residues; that stretch reads KKSKKEKSGKSKK. Residues 73-82 show a composition bias toward basic and acidic residues; that stretch reads EAKEASKAGK. A compositionally biased stretch (basic residues) spans 97 to 108; that stretch reads AARKAARKAEKK. Polar residues predominate over residues 116 to 141; it reads TASSAPTEASSVPAQTLSSSNAGSYT. The short motif at 179-206 is the Q motif element; the sequence is VNFKYLPVTDESQRAPFAGFTAPTPIQA. The Helicase ATP-binding domain maps to 209–382; the sequence is WPFLLSGRDM…STFMVSPVRI (174 aa). Residue 222–229 participates in ATP binding; sequence AETGSGKT. The DEAD box motif lies at 330-333; the sequence is DEAD. The 150-residue stretch at 413 to 562 folds into the Helicase C-terminal domain; that stretch reads RLLQLLKQYQ…EVPEELLKFG (150 aa).

Belongs to the DEAD box helicase family. DDX5/DBP2 subfamily.

It is found in the nucleus. The protein localises to the nucleolus. The catalysed reaction is ATP + H2O = ADP + phosphate + H(+). Functionally, ATP-dependent RNA helicase required for 60S ribosomal subunit synthesis. Involved in efficient pre-rRNA processing, predominantly at site A3, which is necessary for the normal formation of 25S and 5.8S rRNAs. This Phaeosphaeria nodorum (strain SN15 / ATCC MYA-4574 / FGSC 10173) (Glume blotch fungus) protein is ATP-dependent RNA helicase DBP3 (DBP3).